The primary structure comprises 875 residues: Valine--tRNA ligase (875 aa).

Positions 45 to 55 (PNVTGVLHMGH) match the 'HIGH' region motif. The 'KMSKS' region motif lies at 524–528 (KMSKS). Lys-527 provides a ligand contact to ATP. Residues 803–837 (VKSLIDKTKELIRLEKQLEKYKMLNISVSKKLENE) adopt a coiled-coil conformation.

This sequence belongs to the class-I aminoacyl-tRNA synthetase family. ValS type 1 subfamily. In terms of assembly, monomer.

It localises to the cytoplasm. It carries out the reaction tRNA(Val) + L-valine + ATP = L-valyl-tRNA(Val) + AMP + diphosphate. In terms of biological role, catalyzes the attachment of valine to tRNA(Val). As ValRS can inadvertently accommodate and process structurally similar amino acids such as threonine, to avoid such errors, it has a 'posttransfer' editing activity that hydrolyzes mischarged Thr-tRNA(Val) in a tRNA-dependent manner. This chain is Valine--tRNA ligase, found in Borreliella burgdorferi (strain ATCC 35210 / DSM 4680 / CIP 102532 / B31) (Borrelia burgdorferi).